Here is a 413-residue protein sequence, read N- to C-terminus: L-cysteine:1D-myo-inositol 2-amino-2-deoxy-alpha-D-glucopyranoside ligase (413 aa).

The segment at 1-21 is disordered; that stretch reads MQSWSDTALPSVPGQGPPLRL. Cys-43 contacts Zn(2+). L-cysteinyl-5'-AMP is bound by residues 43 to 46, Thr-58, and 81 to 83; these read CGIT and NVT. The short motif at 45–55 is the 'HIGH' region element; it reads ITPYDATHLGH. The short motif at 187 to 192 is the 'ERGGDP' region element; the sequence is ERGGDP. Residue Trp-227 coordinates L-cysteinyl-5'-AMP. Cys-231 serves as a coordination point for Zn(2+). 249–251 serves as a coordination point for L-cysteinyl-5'-AMP; sequence GSD. His-256 is a binding site for Zn(2+). Ile-283 contacts L-cysteinyl-5'-AMP. The 'KMSKS' region motif lies at 289–293; the sequence is KMSKS.

This sequence belongs to the class-I aminoacyl-tRNA synthetase family. MshC subfamily. As to quaternary structure, monomer. Zn(2+) serves as cofactor.

It carries out the reaction 1D-myo-inositol 2-amino-2-deoxy-alpha-D-glucopyranoside + L-cysteine + ATP = 1D-myo-inositol 2-(L-cysteinylamino)-2-deoxy-alpha-D-glucopyranoside + AMP + diphosphate + H(+). In terms of biological role, catalyzes the ATP-dependent condensation of GlcN-Ins and L-cysteine to form L-Cys-GlcN-Ins. This Rhodococcus erythropolis (strain PR4 / NBRC 100887) protein is L-cysteine:1D-myo-inositol 2-amino-2-deoxy-alpha-D-glucopyranoside ligase.